A 201-amino-acid chain; its full sequence is Putative lipoprotein Hmuk_2215 (201 aa).

The first 22 residues, 1–22 (MCPRPRRAVLLGLGVAMSAIAG), serve as a signal peptide directing secretion. C23 is modified (N-acetylcysteine). C23 carries the S-archaeol cysteine lipid modification. Disordered stretches follow at residues 25–78 (ETAP…ETSE) and 182–201 (ATRA…GDCP). The segment covering 69–78 (TRADETETSE) has biased composition (basic and acidic residues).

It is found in the cell membrane. The chain is Putative lipoprotein Hmuk_2215 from Halomicrobium mukohataei (strain ATCC 700874 / DSM 12286 / JCM 9738 / NCIMB 13541) (Haloarcula mukohataei).